The primary structure comprises 451 residues: UDP-glucosyltransferase 74AE2 (451 aa).

His-17 functions as the Proton acceptor in the catalytic mechanism. His-17 lines the an anthocyanidin pocket. Asp-108 functions as the Charge relay in the catalytic mechanism. UDP-alpha-D-glucose contacts are provided by Thr-130, Gln-330, His-345, Trp-348, Asn-349, Ser-350, Glu-353, Asp-369, and Gln-370.

Belongs to the UDP-glycosyltransferase family. Expressed at higher levels in roots than in leaves.

The catalysed reaction is (20S)-ginsenoside C-K + UDP-alpha-D-glucose = (20S)-ginsenoside F2 + UDP + H(+). It carries out the reaction (20S)-protopanaxadiol + UDP-alpha-D-glucose = (20S)-ginsenoside Rh2 + UDP + H(+). It participates in secondary metabolite biosynthesis; terpenoid biosynthesis. Its function is as follows. Component of the dammarane-type triterpene saponins (e.g. PPD-type ginsenosides or panaxosides) biosynthetic pathway. Glycosyltransferase that catalyzes the biosynthesis of ginsenoside Rh2 from protopanaxadiol (PPD) and the conversion of compound K to ginsenoside F2. The protein is UDP-glucosyltransferase 74AE2 of Panax ginseng (Korean ginseng).